A 36-amino-acid polypeptide reads, in one-letter code: Photosystem I reaction center subunit VIII (36 aa).

The chain crosses the membrane as a helical span at residues 7-29; the sequence is PSILVPLVGIIFPGISMALLFIY.

The protein belongs to the PsaI family.

It localises to the plastid. The protein resides in the chloroplast thylakoid membrane. May help in the organization of the PsaL subunit. This Gracilaria tenuistipitata var. liui (Red alga) protein is Photosystem I reaction center subunit VIII.